Reading from the N-terminus, the 464-residue chain is Phosphoglucosamine mutase (464 aa).

The Phosphoserine intermediate role is filled by S112. 4 residues coordinate Mg(2+): S112, D252, D254, and D256. Position 112 is a phosphoserine (S112).

It belongs to the phosphohexose mutase family. Requires Mg(2+) as cofactor. In terms of processing, activated by phosphorylation.

The enzyme catalyses alpha-D-glucosamine 1-phosphate = D-glucosamine 6-phosphate. Functionally, catalyzes the conversion of glucosamine-6-phosphate to glucosamine-1-phosphate. This is Phosphoglucosamine mutase from Synechococcus sp. (strain CC9605).